The following is a 100-amino-acid chain: Large ribosomal subunit protein bL21 (100 aa).

Belongs to the bacterial ribosomal protein bL21 family. Part of the 50S ribosomal subunit. Contacts protein L20.

Its function is as follows. This protein binds to 23S rRNA in the presence of protein L20. The chain is Large ribosomal subunit protein bL21 from Corynebacterium kroppenstedtii (strain DSM 44385 / JCM 11950 / CIP 105744 / CCUG 35717).